Here is a 226-residue protein sequence, read N- to C-terminus: MTQHIVSGGPQVVDSESFSALTNVSRETLDRLLSYEALLRKWQKSINLVSNGSLPELWRRHMLDSAQLVCLVPESARRWIDLGSGGGFPGLVIAILLRERPGFQMHLVESDQRKCVFMREVARVTGAPATVHTVRIEAFAQGAEAGDVVSARALAPLDRLFGWAAPLFGPETIGLFLKGQGLQDELTLARESWIFDAEFSPSQSDPEGSVLKVRGLHGPDGQPHRR.

Residues Gly83, Phe88, 136-137, and Arg152 contribute to the S-adenosyl-L-methionine site; that span reads IE. The disordered stretch occupies residues 199 to 226; the sequence is FSPSQSDPEGSVLKVRGLHGPDGQPHRR.

This sequence belongs to the methyltransferase superfamily. RNA methyltransferase RsmG family.

It localises to the cytoplasm. It catalyses the reaction guanosine(527) in 16S rRNA + S-adenosyl-L-methionine = N(7)-methylguanosine(527) in 16S rRNA + S-adenosyl-L-homocysteine. Its function is as follows. Specifically methylates the N7 position of guanine in position 527 of 16S rRNA. The polypeptide is Ribosomal RNA small subunit methyltransferase G (Parvibaculum lavamentivorans (strain DS-1 / DSM 13023 / NCIMB 13966)).